The sequence spans 213 residues: Protein-L-isoaspartate O-methyltransferase (213 aa).

S64 is an active-site residue.

This sequence belongs to the methyltransferase superfamily. L-isoaspartyl/D-aspartyl protein methyltransferase family.

The protein localises to the cytoplasm. It catalyses the reaction [protein]-L-isoaspartate + S-adenosyl-L-methionine = [protein]-L-isoaspartate alpha-methyl ester + S-adenosyl-L-homocysteine. In terms of biological role, catalyzes the methyl esterification of L-isoaspartyl residues in peptides and proteins that result from spontaneous decomposition of normal L-aspartyl and L-asparaginyl residues. It plays a role in the repair and/or degradation of damaged proteins. This Flavobacterium psychrophilum (strain ATCC 49511 / DSM 21280 / CIP 103535 / JIP02/86) protein is Protein-L-isoaspartate O-methyltransferase.